A 339-amino-acid polypeptide reads, in one-letter code: Anthranilate phosphoribosyltransferase (339 aa).

Residues Gly-79, 82–83 (GD), Thr-87, 89–92 (NIST), 107–115 (KHGNRAVSS), and Ser-119 each bind 5-phospho-alpha-D-ribose 1-diphosphate. Gly-79 contacts anthranilate. Ser-91 is a binding site for Mg(2+). Asn-110 contacts anthranilate. Arg-165 provides a ligand contact to anthranilate. The Mg(2+) site is built by Asp-224 and Glu-225.

Belongs to the anthranilate phosphoribosyltransferase family. As to quaternary structure, homodimer. It depends on Mg(2+) as a cofactor.

It catalyses the reaction N-(5-phospho-beta-D-ribosyl)anthranilate + diphosphate = 5-phospho-alpha-D-ribose 1-diphosphate + anthranilate. The protein operates within amino-acid biosynthesis; L-tryptophan biosynthesis; L-tryptophan from chorismate: step 2/5. Functionally, catalyzes the transfer of the phosphoribosyl group of 5-phosphorylribose-1-pyrophosphate (PRPP) to anthranilate to yield N-(5'-phosphoribosyl)-anthranilate (PRA). This chain is Anthranilate phosphoribosyltransferase, found in Geobacillus sp. (strain WCH70).